The primary structure comprises 100 residues: Large ribosomal subunit protein uL23 (100 aa).

The protein belongs to the universal ribosomal protein uL23 family. In terms of assembly, part of the 50S ribosomal subunit. Contacts protein L29, and trigger factor when it is bound to the ribosome.

Functionally, one of the early assembly proteins it binds 23S rRNA. One of the proteins that surrounds the polypeptide exit tunnel on the outside of the ribosome. Forms the main docking site for trigger factor binding to the ribosome. This chain is Large ribosomal subunit protein uL23, found in Baumannia cicadellinicola subsp. Homalodisca coagulata.